The following is a 293-amino-acid chain: MKTAIITDSTASIKEGEIQDVYVLPLQVIINGQDTYRDGKDIDYDRVYQLLKEHPQGLNISTSLPRQADLIELIEAIKDKYDRFVFLPLSKGLSGTYDMIVQAVKPLSTPKKEFVVLETSDIAISLKWLVQEVKALTDTNCPTKAIAEVVDQHKQSIFTAVTVKNLVQLRKGGRISGLKKIIATLLRVKPIIFFDKGVNTLSGKAFTFVQALEKIFTFVKSKFGDNFKIKRIGFCNAFTPVKAKEVKALILDFLHTNKITLQREIESSFITSAIIAHTGIDAFSISLLLDKNK.

The DegV domain maps to 3 to 289 (TAIITDSTAS…IDAFSISLLL (287 aa)). The hexadecanoate site is built by T62 and S94.

Functionally, may bind long-chain fatty acids, such as palmitate, and may play a role in lipid transport or fatty acid metabolism. The polypeptide is DegV domain-containing protein MG326 homolog (Mycoplasma pneumoniae (strain ATCC 29342 / M129 / Subtype 1) (Mycoplasmoides pneumoniae)).